Here is a 400-residue protein sequence, read N- to C-terminus: Integumentary mucin A.1 (400 aa).

An N-terminal signal peptide occupies residues 1 to 20 (MKHIILCIHFLLMVVGLGQA). P-type domains follow at residues 21-64 (QDCS…FYNA) and 72-115 (LECS…YART). 3 disulfides stabilise this stretch: C23–C49, C33–C48, and C43–C60. The N-linked (GlcNAc...) asparagine glycan is linked to N63. Disulfide bonds link C74-C100, C84-C99, and C94-C111. 2 stretches are compositionally biased toward low complexity: residues 122-264 (PDTT…DTTP) and 272-299 (ETTT…ETTT). The interval 122–302 (PDTTTASTTA…TTTETTTAPP (181 aa)) is disordered. Tandem repeats lie at residues 127 to 135 (ASTTAETTT), 136 to 144 (VPTTPETTT), 145 to 153 (VPTTPETTT), 154 to 162 (VPTTPETTT), 163 to 171 (VPTTPETTT), 172 to 180 (VPTTPETTT), 181 to 189 (VPTTPETTT), 190 to 198 (VPTTPETTT), 199 to 207 (VPTTPETTT), 208 to 216 (VPTTPETTT), 217 to 225 (VPTTPETTT), 226 to 234 (VPTTPETTT), 235 to 243 (ASTTAETTT), and 244 to 252 (VPTTPETTT). The tract at residues 127–261 (ASTTAETTTV…TEPTTTPTTD (135 aa)) is 15 X 9 AA approximate tandem repeats of [AV]-[SP]-T-T-[AP]-E-T-T-T. A 1-15; approximate repeat occupies 253-261 (EPTTTPTTD). A run of 7 repeats spans residues 272–275 (ETTT), 276–279 (ETTT), 280–283 (ETTT), 284–287 (ETTT), 288–291 (ETTT), 292–295 (ETTT), and 296–299 (ETTT). The tract at residues 272 to 299 (ETTTETTTETTTETTTETTTETTTETTT) is 7 X 4 AA repeats of E-T-T-T. P-type domains lie at 298-343 (TTAP…FYTE) and 351-394 (AECT…FEKA). Cystine bridges form between C312–C327, C322–C339, C353–C379, C363–C378, and C373–C390.

In terms of processing, extensively O-glycosylated. Consist of about 70% carbohydrate and 30% protein. In terms of tissue distribution, expressed and stored exclusively in mature mucous glands of the skin.

The protein resides in the secreted. Functionally, could be involved in defense against microbial infections. Protects the epithelia from external environment. The polypeptide is Integumentary mucin A.1 (Xenopus laevis (African clawed frog)).